Reading from the N-terminus, the 73-residue chain is Putative membrane protein insertion efficiency factor (73 aa).

The protein belongs to the UPF0161 family.

Its subcellular location is the cell inner membrane. Functionally, could be involved in insertion of integral membrane proteins into the membrane. This Neisseria meningitidis serogroup C / serotype 2a (strain ATCC 700532 / DSM 15464 / FAM18) protein is Putative membrane protein insertion efficiency factor.